The following is a 351-amino-acid chain: Protein Wnt-4 (351 aa).

Positions 1 to 22 are cleaved as a signal peptide; sequence MSPEYFLRSLLLIILATFSANA. N-linked (GlcNAc...) asparagine glycans are attached at residues asparagine 21 and asparagine 88. 11 cysteine pairs are disulfide-bonded: cysteine 78-cysteine 89, cysteine 128-cysteine 136, cysteine 138-cysteine 155, cysteine 206-cysteine 220, cysteine 208-cysteine 215, cysteine 280-cysteine 311, cysteine 296-cysteine 306, cysteine 310-cysteine 350, cysteine 326-cysteine 341, cysteine 328-cysteine 338, and cysteine 333-cysteine 334. Residue serine 212 is the site of O-palmitoleoyl serine; by PORCN attachment. A glycan (N-linked (GlcNAc...) asparagine) is linked at asparagine 297.

It belongs to the Wnt family. In terms of assembly, interacts with CPZ. In terms of processing, palmitoleoylation is required for efficient binding to frizzled receptors. Depalmitoleoylation leads to Wnt signaling pathway inhibition. Predominantly expressed in the diencephalon neuromere D2.

It is found in the secreted. The protein localises to the extracellular space. Its subcellular location is the extracellular matrix. Functionally, ligand for members of the frizzled family of seven transmembrane receptors. Plays an important role in embryonic development. This chain is Protein Wnt-4 (WNT4), found in Gallus gallus (Chicken).